Here is a 410-residue protein sequence, read N- to C-terminus: 2-hydroxy-5-methyl-1-naphthoate 7-hydroxylase (410 aa).

Cys-350 lines the heme pocket.

Belongs to the cytochrome P450 family. The cofactor is heme.

It carries out the reaction 2-hydroxy-5-methyl-1-naphthoate + 2 reduced [2Fe-2S]-[ferredoxin] + O2 + 2 H(+) = 2,7-dihydroxy-5-methyl-1-naphthoate + 2 oxidized [2Fe-2S]-[ferredoxin] + H2O. It participates in antibiotic biosynthesis. Involved in the biosynthesis of the naphthoic acid (NA) moiety in the chromophore of the enedyine antitumor antibiotic neocarzinostatin (NCS). Catalyzes the hydroxylation at C-7 position of 2-hydroxy-5-methyl-1-naphthoate to yield 2,7-dihydroxy-5-methyl-1-naphthoate. This Streptomyces carzinostaticus protein is 2-hydroxy-5-methyl-1-naphthoate 7-hydroxylase.